We begin with the raw amino-acid sequence, 89 residues long: MSITAERKQALVAEYANKAGDTGSPEVQIAVLSERISNLTNHFKFHKKDNHSRRGLLKMVSQRRRLLDYLKEIDQNRYHTLIKKLGLRR.

It belongs to the universal ribosomal protein uS15 family. As to quaternary structure, part of the 30S ribosomal subunit. Forms a bridge to the 50S subunit in the 70S ribosome, contacting the 23S rRNA.

Functionally, one of the primary rRNA binding proteins, it binds directly to 16S rRNA where it helps nucleate assembly of the platform of the 30S subunit by binding and bridging several RNA helices of the 16S rRNA. Its function is as follows. Forms an intersubunit bridge (bridge B4) with the 23S rRNA of the 50S subunit in the ribosome. This is Small ribosomal subunit protein uS15 from Bartonella quintana (strain Toulouse) (Rochalimaea quintana).